A 487-amino-acid polypeptide reads, in one-letter code: Probable glycine dehydrogenase (decarboxylating) subunit 2 (487 aa).

N6-(pyridoxal phosphate)lysine is present on Lys-273.

It belongs to the GcvP family. C-terminal subunit subfamily. As to quaternary structure, the glycine cleavage system is composed of four proteins: P, T, L and H. In this organism, the P 'protein' is a heterodimer of two subunits. Pyridoxal 5'-phosphate is required as a cofactor.

It catalyses the reaction N(6)-[(R)-lipoyl]-L-lysyl-[glycine-cleavage complex H protein] + glycine + H(+) = N(6)-[(R)-S(8)-aminomethyldihydrolipoyl]-L-lysyl-[glycine-cleavage complex H protein] + CO2. Its function is as follows. The glycine cleavage system catalyzes the degradation of glycine. The P protein binds the alpha-amino group of glycine through its pyridoxal phosphate cofactor; CO(2) is released and the remaining methylamine moiety is then transferred to the lipoamide cofactor of the H protein. The sequence is that of Probable glycine dehydrogenase (decarboxylating) subunit 2 from Lysinibacillus sphaericus (strain C3-41).